The sequence spans 643 residues: Transmembrane 9 superfamily member 4 (643 aa).

The first 23 residues, 1-23, serve as a signal peptide directing secretion; it reads MAAAMIWWPRFLLLLCLTCKGST. At 24-282 the chain is on the extracellular side; that stretch reads FYVPGVAPIN…TMSDVQIHWF (259 aa). The helical transmembrane segment at 283-303 threads the bilayer; sequence SIINSVVVVFFLSGILSMIII. The Cytoplasmic segment spans residues 304–347; the sequence is RTLRKDIANYNKEDDIEDTMEESGWKLVHGDVFRPPQYPMILSS. At Tyr313 the chain carries Phosphotyrosine. Residues 348–368 traverse the membrane as a helical segment; the sequence is LLGSGIQLFCMILIVIFVAML. Residues 369–377 are Extracellular-facing; the sequence is GMLSPSSRG. The chain crosses the membrane as a helical span at residues 378–398; it reads ALMTTACFLFMFMGVFGGFSA. Topologically, residues 399-417 are cytoplasmic; it reads GRLYRTLKGHRWKKGAFCT. Residues 418-438 traverse the membrane as a helical segment; the sequence is ATLYPGVVFGICFVLNCFIWG. Topologically, residues 439–450 are extracellular; it reads KHSSGAVPFPTM. The helical transmembrane segment at 451–471 threads the bilayer; the sequence is VALLCMWFGISLPLVYLGYYF. The Cytoplasmic portion of the chain corresponds to 472–502; sequence GFRKQPYDNPVRTNQIPRQIPEQRWYMNRFV. A helical transmembrane segment spans residues 503 to 523; it reads GILMAGILPFGAMFIELFFIF. The Extracellular portion of the chain corresponds to 524–536; that stretch reads SAIWENQFYYLFG. Residues 537 to 557 traverse the membrane as a helical segment; that stretch reads FLFLVFIILVVSCSQISIVMV. Residues 558–571 are Cytoplasmic-facing; the sequence is YFQLCAEDYRWWWR. A helical membrane pass occupies residues 572 to 592; the sequence is NFLVSGGSAFYVLVYAIFYFV. At 593-599 the chain is on the extracellular side; that stretch reads NKLDIVE. Residues 600–620 form a helical membrane-spanning segment; it reads FIPSLLYFGYTTLMVLSFWLL. At 621–643 the chain is on the cytoplasmic side; sequence TGTIGFYAAYMFVRKIYAAVKID.

It belongs to the nonaspanin (TM9SF) (TC 9.A.2) family.

The protein localises to the membrane. Its subcellular location is the golgi apparatus. The protein resides in the early endosome. In terms of biological role, associates with proteins harboring glycine-rich transmembrane domains and ensures their efficient localization to the cell surface. This chain is Transmembrane 9 superfamily member 4 (Tm9sf4), found in Mus musculus (Mouse).